We begin with the raw amino-acid sequence, 317 residues long: ADIPOR-like receptor IZH1 (317 aa).

The Lumenal portion of the chain corresponds to 1–80 (MSEERGMKEQ…FNNESINIYT (80 aa)). Asn73 carries an N-linked (GlcNAc...) asparagine glycan. The chain crosses the membrane as a helical span at residues 81-101 (HLIPGVAYLVLFLIFADLVLA). At 102–113 (QLLPGLDAGEHR) the chain is on the cytoplasmic side. A helical membrane pass occupies residues 114-136 (MLRFYLLGAFTCLACSSCFHCLK). Over 137–148 (QHSEPHSRLWSK) the chain is Lumenal. A helical membrane pass occupies residues 149 to 169 (VDYLGILAQITCSTISLLYYG). Residues 170-175 (YHSYPS) are Cytoplasmic-facing. Residues 176-196 (HFVFFSTLTVALCSACAVLVL) form a helical membrane-spanning segment. A glycan (N-linked (GlcNAc...) asparagine) is linked at Asn197. Over 197–210 (NDSFNTVAFRPLRA) the chain is Lumenal. Residues 211-231 (FLFMAFGLSGVIPVLAGSYQF) traverse the membrane as a helical segment. The Cytoplasmic portion of the chain corresponds to 232 to 243 (GFAEWAARIQLK). The helical transmembrane segment at 244 to 264 (YVLYEAVFYITGALVYGFRIP) threads the bilayer. The Lumenal segment spans residues 265 to 283 (ERFAPGKFDMVGHSHQIFH). A helical transmembrane segment spans residues 284–304 (LLVVLGTLCHFRAVTGSYIFI). Residues 305–317 (CTGKHYSSLLMFI) lie on the Cytoplasmic side of the membrane.

It belongs to the ADIPOR family.

It localises to the endoplasmic reticulum membrane. Its function is as follows. ADIPOR-like receptor involved in zinc metabolism either by altering membrane sterol content or by directly altering cellular zinc levels. The chain is ADIPOR-like receptor IZH1 (IZH1) from Eremothecium gossypii (strain ATCC 10895 / CBS 109.51 / FGSC 9923 / NRRL Y-1056) (Yeast).